The chain runs to 247 residues: Adenosylcobinamide-GDP ribazoletransferase (247 aa).

A run of 5 helical transmembrane segments spans residues 34–54 (IITF…VFMV), 59–79 (CGVP…TGGF), 113–133 (GGLA…ELAL), 138–158 (ILAS…LLMY), and 194–214 (VLLP…AIFI).

Belongs to the CobS family. The cofactor is Mg(2+).

It localises to the cell inner membrane. It catalyses the reaction alpha-ribazole + adenosylcob(III)inamide-GDP = adenosylcob(III)alamin + GMP + H(+). The catalysed reaction is alpha-ribazole 5'-phosphate + adenosylcob(III)inamide-GDP = adenosylcob(III)alamin 5'-phosphate + GMP + H(+). It participates in cofactor biosynthesis; adenosylcobalamin biosynthesis; adenosylcobalamin from cob(II)yrinate a,c-diamide: step 7/7. Functionally, joins adenosylcobinamide-GDP and alpha-ribazole to generate adenosylcobalamin (Ado-cobalamin). Also synthesizes adenosylcobalamin 5'-phosphate from adenosylcobinamide-GDP and alpha-ribazole 5'-phosphate. The protein is Adenosylcobinamide-GDP ribazoletransferase of Escherichia coli O7:K1 (strain IAI39 / ExPEC).